A 160-amino-acid chain; its full sequence is Major pollen allergen Bet v 1-B (160 aa).

Brassinolide-binding residues include Lys55, Tyr82, Tyr84, and Asn101.

The protein belongs to the BetVI family.

It is found in the cytoplasm. Functionally, may be a general steroid carrier protein. In Betula pendula (European white birch), this protein is Major pollen allergen Bet v 1-B (BETV1B).